The primary structure comprises 89 residues: Small ribosomal subunit protein uS19 (89 aa).

Belongs to the universal ribosomal protein uS19 family.

Its function is as follows. Protein S19 forms a complex with S13 that binds strongly to the 16S ribosomal RNA. This Azobacteroides pseudotrichonymphae genomovar. CFP2 protein is Small ribosomal subunit protein uS19.